Here is a 192-residue protein sequence, read N- to C-terminus: Peroxiredoxin tpx1 (192 aa).

In terms of domain architecture, Thioredoxin spans 3-161 (LQIGKPAPDF…ALRLLDAFQF (159 aa)). Catalysis depends on Cys48, which acts as the Cysteine sulfenic acid (-SOH) intermediate. 2 positions are modified to phosphoserine: Ser105 and Ser148.

The protein belongs to the peroxiredoxin family. AhpC/Prx1 subfamily. In terms of assembly, homodimer; disulfide-linked, upon oxidation. Interacts with srx1 in response to oxidative stress. Interacts with pap1 via transient disulfide linkages. Post-translationally, the enzyme can be inactivated by further oxidation of the cysteine sulfenic acid (C(P)-SOH) to sulphinic acid (C(P)-SO2H) instead of its condensation to a disulfide bond. It can be reactivated by forming a transient disulfide bond with sulfiredoxin srx1, which reduces the cysteine sulfinic acid in an ATP- and Mg-dependent manner.

It localises to the cytoplasm. The protein localises to the nucleus. The enzyme catalyses a hydroperoxide + [thioredoxin]-dithiol = an alcohol + [thioredoxin]-disulfide + H2O. Its function is as follows. Thiol-specific peroxidase that catalyzes the reduction of hydrogen peroxide and organic hydroperoxides to water and alcohols, respectively. Plays a role in cell protection against oxidative stress by detoxifying peroxides and as sensor of hydrogen peroxide-mediated signaling events. Relays hydrogen peroxide as a signal to the transcription factor pap1 by inducing the formation of intramolecular disulfide bonds in pap1, which causes its nuclear accumulation and activation. Reduced by srx1 and this regulation acts as a molecular switch controlling the transcriptional response to hydrogen peroxide. The protein is Peroxiredoxin tpx1 (tpx1) of Schizosaccharomyces pombe (strain 972 / ATCC 24843) (Fission yeast).